A 630-amino-acid polypeptide reads, in one-letter code: MASPEGTDGEGMGCCGWFQVEAIVERKTGDTISDDESEEENETDTDVDGFIDNTLINNTQEDRETAQQLLQVQTAHADAQTLQKLKRKYIGSPLSDISNQQTVYREEVKRRLILSEDSGYGNTLETLETSQQVEYEKGNGCGSSQNGGSQNSNCSEHSVSNMDIDTNMETPTHQLQELFKSSNVQGRLHFKFKEVYGVPYTELVRTFKSDSTCCNDWICAIFGVNETLAEALKTILKPQCVYYHMQCLTCSWGVIVMMLIRYICGKNRKTITKSLSSILNVPQEQMLIQPPKLRSPAVALYFYKTAMSNISEVYGETPEWIQRQTQLQHSLQDNQFELSKMVQWAFDNEVTDDSQIAFLYAQLADIDSNAQAFLKSNMQAKYVKDCGIMCRHYKRAQQQQMNMCQWIKHICSKVDEGGDWKPIVQFLRYQGVDFISFLSYFKLFLQGTPKHNCLVLCGPPNTGKSCFAMSLINFFQGSVISFVNSQSHFWLQPLDNAKLGLLDDATDTCWRYIDDYLRNLLDGNPISLDRKHKQLVQIKCPPVIITTNVNPMQDAKLRYLHSRISVFKFENPFPLDNNGNPVYELSNVNWKCFFERTWSRLNLDNDEDKENNGDSIPTFRCVPEQNTRLL.

A disordered region spans residues 26–46 (RKTGDTISDDESEEENETDTD). The span at 32–46 (ISDDESEEENETDTD) shows a compositional bias: acidic residues. Positions 86-88 (KRK) match the Nuclear localization signal motif. Ser-92 carries the phosphoserine; by host modification. A disordered region spans residues 136 to 166 (EKGNGCGSSQNGGSQNSNCSEHSVSNMDIDT). Residues 142 to 155 (GSSQNGGSQNSNCS) are compositionally biased toward low complexity. The span at 156-166 (EHSVSNMDIDT) shows a compositional bias: polar residues. Residues 167–333 (NMETPTHQLQ…QTQLQHSLQD (167 aa)) form a DNA-binding region region. Positions 432–582 (VDFISFLSYF…FPLDNNGNPV (151 aa)) constitute an SF3 helicase domain. Residue 458–465 (GPPNTGKS) coordinates ATP. Residue Lys-539 forms a Glycyl lysine isopeptide (Lys-Gly) (interchain with G-Cter in SUMO) linkage.

The protein belongs to the papillomaviridae E1 protein family. Can form hexamers. Interacts with E2 protein; this interaction increases E1 DNA binding specificity. Interacts with host DNA polymerase subunit POLA2. Interacts with host single stranded DNA-binding protein RPA1. Interacts with host TOP1; this interaction stimulates the enzymatic activity of TOP1. Phosphorylated. In terms of processing, sumoylated.

The protein localises to the host nucleus. The catalysed reaction is Couples ATP hydrolysis with the unwinding of duplex DNA by translocating in the 3'-5' direction.. It catalyses the reaction ATP + H2O = ADP + phosphate + H(+). Functionally, ATP-dependent DNA 3'-5' helicase required for initiation of viral DNA replication. It forms a complex with the viral E2 protein. The E1-E2 complex binds to the replication origin which contains binding sites for both proteins. During the initial step, a dimer of E1 interacts with a dimer of protein E2 leading to a complex that binds the viral origin of replication with high specificity. Then, a second dimer of E1 displaces the E2 dimer in an ATP-dependent manner to form the E1 tetramer. Following this, two E1 monomers are added to each half of the site, which results in the formation of two E1 trimers on the viral ori. Subsequently, two hexamers will be created. The double hexamer acts as a bi-directional helicase machinery and unwinds the viral DNA and then recruits the host DNA polymerase to start replication. The chain is Replication protein E1 from Homo sapiens (Human).